The chain runs to 341 residues: Probable 2' cyclic ADP-D-ribose synthase TcpO (341 aa).

The region spanning 204-336 is the TIR domain; it reads KEYDIFVSHS…EIIHEILERI (133 aa). NAD(+)-binding positions include 213–214 and lysine 243; that span reads SS. Glutamate 279 is a catalytic residue.

The enzyme catalyses NAD(+) + H2O = ADP-D-ribose + nicotinamide + H(+). It catalyses the reaction NAD(+) = 2'cADPR + nicotinamide + H(+). NAD(+) hydrolase (NADase) that catalyzes cleavage of NAD(+) into ADP-D-ribose (ADPR) and nicotinamide. In addition to ADPR, also generates a cyclization variant of cyclic ADPR (cADPR), termed v-cADPR (probably 2'cADPR). The polypeptide is Probable 2' cyclic ADP-D-ribose synthase TcpO (Methanobrevibacter olleyae).